A 364-amino-acid polypeptide reads, in one-letter code: Anthranilate phosphoribosyltransferase (364 aa).

Residues Gly-101, 104–105 (GD), Thr-109, 111–114 (NLST), 129–137 (KHGNRAASS), and Gly-141 each bind 5-phospho-alpha-D-ribose 1-diphosphate. Gly-101 provides a ligand contact to anthranilate. Ser-113 contributes to the Mg(2+) binding site. Anthranilate is bound at residue Asn-132. An anthranilate-binding site is contributed by Arg-187. Residues Asp-245 and Glu-246 each contribute to the Mg(2+) site.

Belongs to the anthranilate phosphoribosyltransferase family. Homodimer. Mg(2+) is required as a cofactor.

The enzyme catalyses N-(5-phospho-beta-D-ribosyl)anthranilate + diphosphate = 5-phospho-alpha-D-ribose 1-diphosphate + anthranilate. Its pathway is amino-acid biosynthesis; L-tryptophan biosynthesis; L-tryptophan from chorismate: step 2/5. Catalyzes the transfer of the phosphoribosyl group of 5-phosphorylribose-1-pyrophosphate (PRPP) to anthranilate to yield N-(5'-phosphoribosyl)-anthranilate (PRA). The chain is Anthranilate phosphoribosyltransferase from Mycolicibacterium vanbaalenii (strain DSM 7251 / JCM 13017 / BCRC 16820 / KCTC 9966 / NRRL B-24157 / PYR-1) (Mycobacterium vanbaalenii).